The chain runs to 482 residues: tRNA sulfurtransferase (482 aa).

One can recognise a THUMP domain in the interval 61–165 (DVTLSVLTQT…NDKLNLIIAR (105 aa)). ATP-binding positions include 183 to 184 (LI), lysine 265, glycine 287, and glutamine 296. Cysteines 344 and 456 form a disulfide. The Rhodanese domain occupies 404 to 482 (LGSDVVVLDI…GYKNVKVYRP (79 aa)). The active-site Cysteine persulfide intermediate is the cysteine 456.

Belongs to the ThiI family.

Its subcellular location is the cytoplasm. It catalyses the reaction [ThiI sulfur-carrier protein]-S-sulfanyl-L-cysteine + a uridine in tRNA + 2 reduced [2Fe-2S]-[ferredoxin] + ATP + H(+) = [ThiI sulfur-carrier protein]-L-cysteine + a 4-thiouridine in tRNA + 2 oxidized [2Fe-2S]-[ferredoxin] + AMP + diphosphate. The enzyme catalyses [ThiS sulfur-carrier protein]-C-terminal Gly-Gly-AMP + S-sulfanyl-L-cysteinyl-[cysteine desulfurase] + AH2 = [ThiS sulfur-carrier protein]-C-terminal-Gly-aminoethanethioate + L-cysteinyl-[cysteine desulfurase] + A + AMP + 2 H(+). The protein operates within cofactor biosynthesis; thiamine diphosphate biosynthesis. Its function is as follows. Catalyzes the ATP-dependent transfer of a sulfur to tRNA to produce 4-thiouridine in position 8 of tRNAs, which functions as a near-UV photosensor. Also catalyzes the transfer of sulfur to the sulfur carrier protein ThiS, forming ThiS-thiocarboxylate. This is a step in the synthesis of thiazole, in the thiamine biosynthesis pathway. The sulfur is donated as persulfide by IscS. The protein is tRNA sulfurtransferase of Aliivibrio fischeri (strain MJ11) (Vibrio fischeri).